The chain runs to 133 residues: Small ribosomal subunit protein uS11 (133 aa).

The protein belongs to the universal ribosomal protein uS11 family. As to quaternary structure, part of the 30S ribosomal subunit. Interacts with proteins S7 and S18. Binds to IF-3.

Located on the platform of the 30S subunit, it bridges several disparate RNA helices of the 16S rRNA. Forms part of the Shine-Dalgarno cleft in the 70S ribosome. This Ralstonia pickettii (strain 12J) protein is Small ribosomal subunit protein uS11.